Here is a 290-residue protein sequence, read N- to C-terminus: N-acetylmannosamine kinase (290 aa).

ATP-binding positions include 5–12 and 132–139; these read AIDIGGTK and GVGGGVVS. The Zn(2+) site is built by His-156, Cys-166, Cys-168, and Cys-173.

The protein belongs to the ROK (NagC/XylR) family. NanK subfamily. Homodimer.

The catalysed reaction is an N-acyl-D-mannosamine + ATP = an N-acyl-D-mannosamine 6-phosphate + ADP + H(+). The protein operates within amino-sugar metabolism; N-acetylneuraminate degradation; D-fructose 6-phosphate from N-acetylneuraminate: step 2/5. In terms of biological role, catalyzes the phosphorylation of N-acetylmannosamine (ManNAc) to ManNAc-6-P. This is N-acetylmannosamine kinase from Citrobacter koseri (strain ATCC BAA-895 / CDC 4225-83 / SGSC4696).